The chain runs to 749 residues: Protein SEY1 homolog 2 (749 aa).

Residues 1-671 (MIKNYGDRYH…QKHKQDFLQN (671 aa)) lie on the Cytoplasmic side of the membrane. The region spanning 40–265 (GKNYNIVSII…YEKNVRWSDM (226 aa)) is the GB1/RHD3-type G domain. 50-57 (GSQSTGKS) provides a ligand contact to GTP. Residues 445–465 (NQLKAFVEAQLATFKQQLDNI) adopt a coiled-coil conformation. The helical transmembrane segment at 672 to 692 (IPKPFWFLLLFFMYDDVLRWM) threads the bilayer. The Lumenal portion of the chain corresponds to 693–695 (GNP). Residues 696 to 716 (LFLYPILIILCFVGFCIAIGL) traverse the membrane as a helical segment. Topologically, residues 717–749 (HSLPKLAFQWVFRTLNQAVIPIIFGGISKLKGS) are cytoplasmic.

It belongs to the TRAFAC class dynamin-like GTPase superfamily. GB1/RHD3 GTPase family. RHD3 subfamily.

Its subcellular location is the endoplasmic reticulum membrane. Its function is as follows. Probable GTP-binding protein that may be involved in cell development. This Paramecium tetraurelia protein is Protein SEY1 homolog 2.